A 221-amino-acid chain; its full sequence is GTP cyclohydrolase 1 (221 aa).

Residues cysteine 109, histidine 112, and cysteine 180 each contribute to the Zn(2+) site.

Belongs to the GTP cyclohydrolase I family. Toroid-shaped homodecamer, composed of two pentamers of five dimers.

It catalyses the reaction GTP + H2O = 7,8-dihydroneopterin 3'-triphosphate + formate + H(+). It functions in the pathway cofactor biosynthesis; 7,8-dihydroneopterin triphosphate biosynthesis; 7,8-dihydroneopterin triphosphate from GTP: step 1/1. This chain is GTP cyclohydrolase 1, found in Sodalis glossinidius (strain morsitans).